We begin with the raw amino-acid sequence, 174 residues long: Dual-action ribosomal maturation protein DarP (174 aa).

Belongs to the DarP family.

Its subcellular location is the cytoplasm. In terms of biological role, member of a network of 50S ribosomal subunit biogenesis factors which assembles along the 30S-50S interface, preventing incorrect 23S rRNA structures from forming. Promotes peptidyl transferase center (PTC) maturation. This is Dual-action ribosomal maturation protein DarP from Vibrio atlanticus (strain LGP32) (Vibrio splendidus (strain Mel32)).